Reading from the N-terminus, the 360-residue chain is Peptide chain release factor 1 (360 aa).

At glutamine 237 the chain carries N5-methylglutamine.

This sequence belongs to the prokaryotic/mitochondrial release factor family. In terms of processing, methylated by PrmC. Methylation increases the termination efficiency of RF1.

It is found in the cytoplasm. In terms of biological role, peptide chain release factor 1 directs the termination of translation in response to the peptide chain termination codons UAG and UAA. This is Peptide chain release factor 1 from Pseudomonas syringae pv. syringae (strain B728a).